The sequence spans 254 residues: MSTAPKAPDFLVVIPARLGSTRLPRKPLADIGGKPMVVRVAERAKQSLAHSVIVATDSPEIQAACDEHRIECLLTSPDHPTGTDRIAEVAQLLKLPSNALVVNVQGDEPLIPPELINQVAQTLAEHPQCAISTVAVLISEPSEIDNSNVVKVVLNREGEALYFSRAPIPYVRDPQELIKTEHLRHLGIYAYRADFLQAYTRLDPAPPEQAEALEQLRALWNGYRIAVHTAPEAPPAGVDTLDDLERVRQLLGNT.

This sequence belongs to the KdsB family.

Its subcellular location is the cytoplasm. It carries out the reaction 3-deoxy-alpha-D-manno-oct-2-ulosonate + CTP = CMP-3-deoxy-beta-D-manno-octulosonate + diphosphate. It participates in nucleotide-sugar biosynthesis; CMP-3-deoxy-D-manno-octulosonate biosynthesis; CMP-3-deoxy-D-manno-octulosonate from 3-deoxy-D-manno-octulosonate and CTP: step 1/1. The protein operates within bacterial outer membrane biogenesis; lipopolysaccharide biosynthesis. In terms of biological role, activates KDO (a required 8-carbon sugar) for incorporation into bacterial lipopolysaccharide in Gram-negative bacteria. The chain is 3-deoxy-manno-octulosonate cytidylyltransferase from Polynucleobacter asymbioticus (strain DSM 18221 / CIP 109841 / QLW-P1DMWA-1) (Polynucleobacter necessarius subsp. asymbioticus).